We begin with the raw amino-acid sequence, 401 residues long: Phosphoglycerate kinase (401 aa).

Substrate contacts are provided by residues 23-25 (DLN), Arg-38, 61-64 (HFGR), Arg-120, and Arg-153. ATP contacts are provided by residues Lys-203, Glu-325, and 355–358 (GGDT).

It belongs to the phosphoglycerate kinase family. In terms of assembly, monomer.

The protein localises to the cytoplasm. The catalysed reaction is (2R)-3-phosphoglycerate + ATP = (2R)-3-phospho-glyceroyl phosphate + ADP. Its pathway is carbohydrate degradation; glycolysis; pyruvate from D-glyceraldehyde 3-phosphate: step 2/5. The sequence is that of Phosphoglycerate kinase from Rhizobium johnstonii (strain DSM 114642 / LMG 32736 / 3841) (Rhizobium leguminosarum bv. viciae).